The sequence spans 247 residues: Adenosylcobinamide-GDP ribazoletransferase (247 aa).

A run of 5 helical transmembrane segments spans residues Ile-34–Val-54, Cys-59–Phe-79, Gly-113–Leu-133, Ile-138–Tyr-158, and Val-194–Ile-214.

This sequence belongs to the CobS family. The cofactor is Mg(2+).

It is found in the cell inner membrane. The enzyme catalyses alpha-ribazole + adenosylcob(III)inamide-GDP = adenosylcob(III)alamin + GMP + H(+). It catalyses the reaction alpha-ribazole 5'-phosphate + adenosylcob(III)inamide-GDP = adenosylcob(III)alamin 5'-phosphate + GMP + H(+). It participates in cofactor biosynthesis; adenosylcobalamin biosynthesis; adenosylcobalamin from cob(II)yrinate a,c-diamide: step 7/7. Functionally, joins adenosylcobinamide-GDP and alpha-ribazole to generate adenosylcobalamin (Ado-cobalamin). Also synthesizes adenosylcobalamin 5'-phosphate from adenosylcobinamide-GDP and alpha-ribazole 5'-phosphate. The chain is Adenosylcobinamide-GDP ribazoletransferase from Shigella boydii serotype 4 (strain Sb227).